The sequence spans 873 residues: Inner centromere protein A (873 aa).

7 disordered regions span residues 50-124 (AEPE…KRMT), 237-270 (PANE…VVRK), 282-452 (FSLA…PPPH), 484-535 (KRNT…KVRR), 566-649 (QIDE…LAEQ), 683-736 (LERA…EQAA), and 781-800 (DLNS…PIPA). Residues 60–69 (SQKRRRKKRT) show a composition bias toward basic residues. Positions 87–105 (RQSNASWSSSVRRLSVRNQ) are enriched in low complexity. Over residues 239-254 (NEQQLNLSNQSATPTG) the composition is skewed to polar residues. Residues 261–270 (SVRRSLVVRK) show a composition bias toward basic residues. Positions 286–297 (SKRESMTREAVR) are enriched in basic and acidic residues. Low complexity predominate over residues 314 to 325 (SSTSSQRSYQSS). Residues 437-452 (PSPPCPPSKIVRPPPH) are compositionally biased toward pro residues. Composition is skewed to basic and acidic residues over residues 491–535 (TDPK…KVRR), 566–584 (QIDE…EEKA), 591–649 (KKQE…LAEQ), and 683–733 (LERA…KAKE). The segment at 494–707 (KTEEKERQRL…EERKKREQQE (214 aa)) is SAH. Residues 782 to 856 (LNSDDSTDDE…RTSSAVWHSP (75 aa)) are IN box. Phosphoserine is present on residues Ser-849 and Ser-850.

The protein belongs to the INCENP family. As to quaternary structure, component of the CPC composed of survivin/birc5, incenp, cdca8/borealin and/or cdca9/dasra-A, and aurkb/aurora-B. Interacts (via C-terminus) with aurkb (via N-terminus and kinase domain). Interacts (via N-terminus) with birc5.1, birc5.2, cdca8 and cdca9. Interacts with mtus1.

It is found in the nucleus. It localises to the chromosome. The protein resides in the centromere. The protein localises to the cytoplasm. Its subcellular location is the cytoskeleton. It is found in the spindle. It localises to the midbody. The protein resides in the kinetochore. Its function is as follows. Component of the chromosomal passenger complex (CPC), a complex that acts as a key regulator of mitosis. The CPC complex has essential functions at the centromere in ensuring correct chromosome alignment and segregation and is required for chromatin-induced microtubule stabilization and spindle assembly. Acts as a scaffold regulating CPC localization and activity. The C-terminus associates with aurkb/aurora-B, the N-terminus associated with cdca8/borealin and/or cdca9/dasra-A tethers the CPC to the inner centromere, and the microtubule binding activity within the central SAH domain directs aurkb/aurora-B toward substrates near microtubules. Activates aurkb. This is Inner centromere protein A (incenp-a) from Xenopus laevis (African clawed frog).